The chain runs to 739 residues: Cleavage and polyadenylation specificity factor subunit 2 (739 aa).

A compositionally biased stretch (basic and acidic residues) spans 411–423 (VKEEETKASHGSD). The disordered stretch occupies residues 411-430 (VKEEETKASHGSDDNSSEPM).

It belongs to the metallo-beta-lactamase superfamily. RNA-metabolizing metallo-beta-lactamase-like family. CPSF2/YSH1 subfamily. In terms of assembly, component of the CPSF complex, at least composed of CPSF160, CPSF100, CPSF73-I, CPSF73-II, CPSF30, FY and FIPS5. Forms a complex with cleavage and polyadenylation specificity factor (CPSF) subunits FY, PAPS2, CSTF50, CPSF30, CPSF73-I, CPSF73-II and CPSF160.

It localises to the nucleus. The protein localises to the cytoplasm. In terms of biological role, CPSF plays a key role in pre-mRNA 3'-end formation, recognizing the AAUAAA signal sequence and interacting with poly(A)polymerase and other factors to bring about cleavage and poly(A) addition. Required for antisense-RNA-mediated gene silencing. The polypeptide is Cleavage and polyadenylation specificity factor subunit 2 (CPSF100) (Arabidopsis thaliana (Mouse-ear cress)).